Reading from the N-terminus, the 299-residue chain is Ribosomal RNA small subunit methyltransferase H (299 aa).

S-adenosyl-L-methionine contacts are provided by residues 36 to 38, aspartate 55, aspartate 103, and glutamine 110; that span reads GGH. Basic and acidic residues-rich tracts occupy residues 268 to 282 and 289 to 299; these read KPVR…ENPR and RAAERIEKGGD. The tract at residues 268 to 299 is disordered; it reads KPVRPSEEEIRENPRARSGRLRAAERIEKGGD.

The protein belongs to the methyltransferase superfamily. RsmH family.

It is found in the cytoplasm. It carries out the reaction cytidine(1402) in 16S rRNA + S-adenosyl-L-methionine = N(4)-methylcytidine(1402) in 16S rRNA + S-adenosyl-L-homocysteine + H(+). Specifically methylates the N4 position of cytidine in position 1402 (C1402) of 16S rRNA. In Thermotoga sp. (strain RQ2), this protein is Ribosomal RNA small subunit methyltransferase H.